The sequence spans 219 residues: Histone H1.01 (219 aa).

Composition is skewed to low complexity over residues Met-1 to Ala-19 and Ala-27 to Pro-39. Disordered regions lie at residues Met-1–Ser-40 and Leu-94–Lys-219. An N-acetylserine modification is found at Ser-2. The H15 domain occupies Ala-37–Lys-110. Composition is skewed to basic residues over residues Ala-119–Ala-134, Lys-142–Lys-159, Lys-167–Ala-185, and Lys-192–Lys-219.

This sequence belongs to the histone H1/H5 family.

It localises to the nucleus. It is found in the chromosome. Histones H1 are necessary for the condensation of nucleosome chains into higher-order structures. This Gallus gallus (Chicken) protein is Histone H1.01.